Consider the following 458-residue polypeptide: MMLIPMASVMAVTEPKWVSVWSRFLWVTLLSMVLGSLLALLLPLGAVEEQCLAVLKGLYLLRSKPDRAQHAATKCTSPSTELSITSRGATLLVAKTKASPAGKLEARAALNQALEMKRQGKREKAQKLFMHALKMDPDFVDALTEFGIFSEEDKDIIQADYLYTRALTISPYHEKALVNRDRTLPLVEEIDQRYFSIIDSKVKKVMSIPKGNSALRRVMEETYYHHIYHTVAIEGNTLTLSEIRHILETRYAVPGKSLEEQNEVIGMHAAMKYINTTLVSRIGSVTISDVLEIHRRVLGYVDPVEAGRFRTTQVLVGHHIPPHPQDVEKQMQEFVQWLNSEEAMNLHPVEFAALAHYKLVYIHPFIDGNGRTSRLLMNLILMQAGYPPITIRKEQRSDYYHVLEAANEGDVRPFIRFIAKCTETTLDTLLFATTEYSVALPEAQPNHSGFKETLPVKP.

Residues 1 to 23 (MMLIPMASVMAVTEPKWVSVWSR) lie on the Cytoplasmic side of the membrane. The chain crosses the membrane as a helical; Signal-anchor for type II membrane protein span at residues 24–44 (FLWVTLLSMVLGSLLALLLPL). Topologically, residues 45–458 (GAVEEQCLAV…GFKETLPVKP (414 aa)) are lumenal. O-AMP-serine; by autocatalysis is present on Ser79. Thr80 is subject to O-AMP-threonine; by autocatalysis. TPR repeat units follow at residues 106 to 139 (ARAA…DPDF) and 140 to 173 (VDAL…SPYH). Residue Thr183 is modified to O-AMP-threonine; by autocatalysis. An Inhibitory (S/T)XXXE(G/N) motif motif is present at residues 230–235 (TVAIEG). Glu234 provides a ligand contact to ATP. An N-linked (GlcNAc...) asparagine glycan is attached at Asn275. Residues 285 to 420 (VTISDVLEIH…VRPFIRFIAK (136 aa)) enclose the Fido domain. ATP is bound at residue 316-319 (VGHH). His363 is a catalytic residue. Residues 367–374 (DGNGRTSR), 399–400 (YY), and Asn407 contribute to the ATP site. Residue Asn446 is glycosylated (N-linked (GlcNAc...) asparagine).

The protein belongs to the fic family. In terms of assembly, homodimer. Interacts with HD. Requires Mg(2+) as cofactor. Mn(2+) is required as a cofactor. Post-translationally, auto-AMPylated in vitro; it is unclear whether auto-AMPylation is relevant in vivo. In terms of processing, N-glycosylated; predominantly glycosylated at Asn-275. Ubiquitous.

It is found in the endoplasmic reticulum membrane. The enzyme catalyses L-tyrosyl-[protein] + ATP = O-(5'-adenylyl)-L-tyrosyl-[protein] + diphosphate. It carries out the reaction 3-O-(5'-adenylyl)-L-threonyl-[protein] + H2O = L-threonyl-[protein] + AMP + H(+). It catalyses the reaction L-threonyl-[protein] + ATP = 3-O-(5'-adenylyl)-L-threonyl-[protein] + diphosphate. With respect to regulation, the side chain of Glu-234 determines which of the two opposing activities (AMPylase or de-AMPylase) will take place. In response to endoplasmic reticulum stress, mediates de-AMPylase activity. Adenylyltransferase activity is inhibited by the inhibitory helix present at the N-terminus: Glu-234 binds ATP and competes with ATP-binding at Arg-374, thereby preventing adenylyltransferase activity. In unstressed cells, disengagement of Glu-234 promotes adenylyltransferase activity. Activation dissociates ATP-binding from Glu-234, allowing ordered binding of the entire ATP moiety with the alpha-phosphate in an orientation that is productive for accepting an incoming target hydroxyl side chain. Its function is as follows. Protein that can both mediate the addition of adenosine 5'-monophosphate (AMP) to specific residues of target proteins (AMPylation), and the removal of the same modification from target proteins (de-AMPylation), depending on the context. The side chain of Glu-231 determines which of the two opposing activities (AMPylase or de-AMPylase) will take place. Acts as a key regulator of the ERN1/IRE1-mediated unfolded protein response (UPR) by mediating AMPylation or de-AMPylation of HSPA5/BiP. In unstressed cells, acts as an adenylyltransferase by mediating AMPylation of HSPA5/BiP at 'Thr-518', thereby inactivating it. In response to endoplasmic reticulum stress, acts as a phosphodiesterase by mediating removal of ATP (de-AMPylation) from HSPA5/BiP at 'Thr-518', leading to restore HSPA5/BiP activity. Although it is able to AMPylate RhoA, Rac and Cdc42 Rho GTPases in vitro, Rho GTPases do not constitute physiological substrates. This is Protein adenylyltransferase FICD from Homo sapiens (Human).